The primary structure comprises 549 residues: Cation/acetate symporter ActP (549 aa).

13 helical membrane passes run I32–K54, G75–T97, G102–L124, I145–G167, V182–T204, A211–F233, A263–F285, F298–L320, A361–S383, V404–F423, I428–S450, L462–V484, and Y494–I516.

It belongs to the sodium:solute symporter (SSF) (TC 2.A.21) family.

It localises to the cell inner membrane. Transports acetate. The protein is Cation/acetate symporter ActP of Photorhabdus laumondii subsp. laumondii (strain DSM 15139 / CIP 105565 / TT01) (Photorhabdus luminescens subsp. laumondii).